The sequence spans 126 residues: uncharacterized protein (126 aa).

This is an uncharacterized protein from Acanthamoeba polyphaga mimivirus (APMV).